The sequence spans 283 residues: uncharacterized protein (283 aa).

Residue glycine 2 is the site of N-myristoyl glycine; by host attachment. Asparagine 31, asparagine 95, asparagine 105, asparagine 108, asparagine 137, and asparagine 147 each carry an N-linked (GlcNAc...) asparagine; by host glycan. 2 helical membrane passes run 181–201 (IIAA…VVYF) and 250–270 (FIVL…LDIP). N-linked (GlcNAc...) asparagine; by host glycosylation is present at asparagine 277.

Its subcellular location is the membrane. This is an uncharacterized protein from Acanthamoeba polyphaga (Amoeba).